Consider the following 155-residue polypeptide: Deoxyuridine 5'-triphosphate nucleotidohydrolase (155 aa).

Substrate-binding positions include 74–76 (RSG), Asn-87, and 91–93 (LID).

This sequence belongs to the dUTPase family. Mg(2+) serves as cofactor.

The catalysed reaction is dUTP + H2O = dUMP + diphosphate + H(+). Its pathway is pyrimidine metabolism; dUMP biosynthesis; dUMP from dCTP (dUTP route): step 2/2. Its function is as follows. This enzyme is involved in nucleotide metabolism: it produces dUMP, the immediate precursor of thymidine nucleotides and it decreases the intracellular concentration of dUTP so that uracil cannot be incorporated into DNA. This Xanthomonas oryzae pv. oryzae (strain PXO99A) protein is Deoxyuridine 5'-triphosphate nucleotidohydrolase.